The primary structure comprises 184 residues: Potassium-transporting ATPase KdpC subunit (184 aa).

The helical transmembrane segment at 10–30 (LTFLMVVLFAVIYPLAIYGIA) threads the bilayer.

The protein belongs to the KdpC family. In terms of assembly, the system is composed of three essential subunits: KdpA, KdpB and KdpC.

It is found in the cell inner membrane. Functionally, part of the high-affinity ATP-driven potassium transport (or Kdp) system, which catalyzes the hydrolysis of ATP coupled with the electrogenic transport of potassium into the cytoplasm. This subunit acts as a catalytic chaperone that increases the ATP-binding affinity of the ATP-hydrolyzing subunit KdpB by the formation of a transient KdpB/KdpC/ATP ternary complex. This is Potassium-transporting ATPase KdpC subunit from Flavobacterium psychrophilum (strain ATCC 49511 / DSM 21280 / CIP 103535 / JIP02/86).